Consider the following 369-residue polypeptide: 3',5'-cyclic-nucleotide phosphodiesterase 1 (369 aa).

The protein belongs to the cyclic nucleotide phosphodiesterase class-II family.

The enzyme catalyses a nucleoside 3',5'-cyclic phosphate + H2O = a nucleoside 5'-phosphate + H(+). In terms of biological role, controls the level of cAMP in yeast cells, together with the high-affinity cAMP phosphodiesterase (PDE2). In Saccharomyces cerevisiae (strain ATCC 204508 / S288c) (Baker's yeast), this protein is 3',5'-cyclic-nucleotide phosphodiesterase 1 (PDE1).